Reading from the N-terminus, the 427-residue chain is Glutamate-1-semialdehyde 2,1-aminomutase (427 aa).

An N6-(pyridoxal phosphate)lysine modification is found at Lys265.

It belongs to the class-III pyridoxal-phosphate-dependent aminotransferase family. HemL subfamily. Homodimer. Pyridoxal 5'-phosphate serves as cofactor.

It localises to the cytoplasm. The enzyme catalyses (S)-4-amino-5-oxopentanoate = 5-aminolevulinate. It functions in the pathway porphyrin-containing compound metabolism; protoporphyrin-IX biosynthesis; 5-aminolevulinate from L-glutamyl-tRNA(Glu): step 2/2. The chain is Glutamate-1-semialdehyde 2,1-aminomutase from Bordetella parapertussis (strain 12822 / ATCC BAA-587 / NCTC 13253).